The primary structure comprises 127 residues: Photosystem II reaction center Psb28 protein (127 aa).

A disordered region spans residues 107–127; that stretch reads GLGYSQNQNSDQTDGDANAEA. The span at 109–118 shows a compositional bias: polar residues; sequence GYSQNQNSDQ.

Belongs to the Psb28 family. In terms of assembly, part of the photosystem II complex.

It localises to the cellular thylakoid membrane. This is Photosystem II reaction center Psb28 protein from Parasynechococcus marenigrum (strain WH8102).